The chain runs to 185 residues: Large ribosomal subunit protein bL25 (185 aa).

This sequence belongs to the bacterial ribosomal protein bL25 family. CTC subfamily. Part of the 50S ribosomal subunit; part of the 5S rRNA/L5/L18/L25 subcomplex. Contacts the 5S rRNA. Binds to the 5S rRNA independently of L5 and L18.

In terms of biological role, this is one of the proteins that binds to the 5S RNA in the ribosome where it forms part of the central protuberance. In Chlamydia trachomatis serovar D (strain ATCC VR-885 / DSM 19411 / UW-3/Cx), this protein is Large ribosomal subunit protein bL25.